The sequence spans 585 residues: Putative phospholipase B-like 2 (585 aa).

An N-terminal signal peptide occupies residues Met1–Ala35. N-linked (GlcNAc...) asparagine glycosylation is found at Asn84, Asn102, and Asn106. Cys138 and Cys148 form a disulfide bridge. 2 N-linked (GlcNAc...) asparagine glycosylation sites follow: Asn227 and Asn432. Cys488 and Cys491 are joined by a disulfide. N-linked (GlcNAc...) asparagine glycosylation is present at Asn511.

It belongs to the phospholipase B-like family. As to quaternary structure, interacts with IGF2R. In terms of processing, glycosylated; contains mannose 6-phosphate sugars.

It is found in the lysosome lumen. Its function is as follows. Putative phospholipase. The sequence is that of Putative phospholipase B-like 2 (Plbd2) from Rattus norvegicus (Rat).